The chain runs to 49 residues: Large ribosomal subunit protein bL33 (49 aa).

It belongs to the bacterial ribosomal protein bL33 family.

The protein is Large ribosomal subunit protein bL33 of Natranaerobius thermophilus (strain ATCC BAA-1301 / DSM 18059 / JW/NM-WN-LF).